The sequence spans 129 residues: MMTDPIADMFTRIRNGQSAAKVAVQMPSSKVKVAIATLLKEEGYISEFSVSGEVKPELAVTLKYFEGKEVIEKIKRVSRPGLRIYKSCDELPKVLAGMGIAIISTSKGLMTDRAARSAGIGGEVLGFVE.

The protein belongs to the universal ribosomal protein uS8 family. Part of the 30S ribosomal subunit. Contacts proteins S5 and S12.

Its function is as follows. One of the primary rRNA binding proteins, it binds directly to 16S rRNA central domain where it helps coordinate assembly of the platform of the 30S subunit. This is Small ribosomal subunit protein uS8 from Colwellia psychrerythraea (strain 34H / ATCC BAA-681) (Vibrio psychroerythus).